A 258-amino-acid polypeptide reads, in one-letter code: Hydroxyacylglutathione hydrolase (258 aa).

Residues His-54, His-56, Asp-58, His-59, His-113, Asp-138, and His-176 each coordinate Zn(2+).

The protein belongs to the metallo-beta-lactamase superfamily. Glyoxalase II family. In terms of assembly, monomer. Requires Zn(2+) as cofactor.

It catalyses the reaction an S-(2-hydroxyacyl)glutathione + H2O = a 2-hydroxy carboxylate + glutathione + H(+). Its pathway is secondary metabolite metabolism; methylglyoxal degradation; (R)-lactate from methylglyoxal: step 2/2. Its function is as follows. Thiolesterase that catalyzes the hydrolysis of S-D-lactoyl-glutathione to form glutathione and D-lactic acid. The chain is Hydroxyacylglutathione hydrolase from Synechococcus sp. (strain ATCC 27144 / PCC 6301 / SAUG 1402/1) (Anacystis nidulans).